The primary structure comprises 376 residues: Nucleoside diphosphate kinase homolog 7 (376 aa).

In terms of domain architecture, DM10 spans 3 to 91 (HSERFVFIAE…YTARQLGSRK (89 aa)).

It belongs to the NDK family. In terms of assembly, component of sperm flagellar doublet microtubules. Component of the gamma-tubulin ring complex. Post-translationally, undergoes autophosphorylation. In terms of tissue distribution, expressed in airway epithelial cells.

Its subcellular location is the cytoplasm. It is found in the cytoskeleton. The protein localises to the microtubule organizing center. The protein resides in the centrosome. It localises to the nucleus. Its subcellular location is the spindle. It is found in the cilium axoneme. The protein localises to the flagellum axoneme. The protein resides in the cell projection. It localises to the cilium. Possesses an intrinsic kinase activity. Displays 3'-5' exonuclease activity with a preference for single-stranded DNA. Does not seem to have nucleoside diphosphate kinase activity. Functional component of the gamma-tubulin ring complex, implicated in the regulation of the microtubule-nucleating activity of the gamma-tubulin ring complex in centrosomes, in a kinase activity-dependent manner. Part of the dynein-decorated doublet microtubules (DMTs) in cilia axoneme, which is required for motile cilia beating. The polypeptide is Nucleoside diphosphate kinase homolog 7 (Homo sapiens (Human)).